The sequence spans 475 residues: Proton-coupled amino acid transporter 1 (475 aa).

Over residues 1 to 15 (MSTQRLRNEDYHDYS) the composition is skewed to basic and acidic residues. The segment at 1–32 (MSTQRLRNEDYHDYSSTDVSPEESPSEGLGSF) is disordered. The Cytoplasmic portion of the chain corresponds to 1–50 (MSTQRLRNEDYHDYSSTDVSPEESPSEGLGSFSPGSYQRLGENSSMTWFQ). Residues 51-71 (TLIHLLKGNIGTGLLGLPLAV) traverse the membrane as a helical segment. The Extracellular segment spans residues 72 to 77 (KNAGLL). A helical transmembrane segment spans residues 78–98 (LGPLSLLVIGIVAVHCMGILV). The Cytoplasmic segment spans residues 99–140 (KCAHHLCRRLNKPFLDYGDTVMYGLECSPSTWIRNHSHWGRR). A helical transmembrane segment spans residues 141 to 161 (IVDFFLVVTQLGFCCVYFVFL). Residues 162–189 (ADNFKQVIEAANGTTTNCNNNETVILTP) lie on the Extracellular side of the membrane. Asn-173 and Asn-182 each carry an N-linked (GlcNAc...) asparagine glycan. Residues Cys-179 and Cys-328 are joined by a disulfide bond. The chain crosses the membrane as a helical span at residues 190–210 (TMDSRLYMLTFLPFLVLLSFI). Topologically, residues 211–214 (RNLR) are cytoplasmic. Residues 215–235 (ILSIFSLLANISMFVSLIMIY) form a helical membrane-spanning segment. At 236–256 (QFIVQRIPDPSHLPLVAPWKT) the chain is on the extracellular side. Residues 257 to 277 (YPLFFGTAIFAFEGIGVVLPL) traverse the membrane as a helical segment. At 278-288 (ENKMKDSQKFP) the chain is on the cytoplasmic side. Residues 289–309 (LILYLGMAIITVLYISLGSLG) form a helical membrane-spanning segment. Residues 310–341 (YLQFGADIKGSITLNLPNCWLYQSVKLLYSIG) lie on the Extracellular side of the membrane. Residues 342–362 (IFFTYALQFYVAAEIIIPAIV) traverse the membrane as a helical segment. Over 363–371 (SRVPERFEL) the chain is Cytoplasmic. A helical membrane pass occupies residues 372–392 (VVDLSARTAMVCVTCVLAVLI). Residues 393 to 396 (PRLD) lie on the Extracellular side of the membrane. The chain crosses the membrane as a helical span at residues 397 to 417 (LVISLVGSVSSSALALIIPPL). The Cytoplasmic segment spans residues 418–438 (LEVTTYYGEGISPLTITKDAL). A helical membrane pass occupies residues 439–459 (ISILGFVGFVVGTYESLWELI). The Extracellular portion of the chain corresponds to 460 to 475 (QPSHSDSSTNSTSAFI). The N-linked (GlcNAc...) asparagine glycan is linked to Asn-469.

The protein belongs to the amino acid/polyamine transporter 2 family. In terms of tissue distribution, widely expressed and predominantly expressed in brain. Within the brain, expression restricted to neurons and not detected in glial cells. Abundant in regions rich in neurons using glutamate and GABA such as Purkinje cells in the cerebellum and pyramidal cells in the hippocampus.

It is found in the cell membrane. The protein resides in the apical cell membrane. It localises to the lysosome membrane. The catalysed reaction is glycine(in) + H(+)(in) = glycine(out) + H(+)(out). It catalyses the reaction L-proline(out) + H(+)(out) = L-proline(in) + H(+)(in). It carries out the reaction D-proline(out) + H(+)(out) = D-proline(in) + H(+)(in). The enzyme catalyses L-alanine(in) + H(+)(in) = L-alanine(out) + H(+)(out). The catalysed reaction is D-alanine(in) + H(+)(in) = D-alanine(out) + H(+)(out). It catalyses the reaction L-serine(in) + H(+)(in) = L-serine(out) + H(+)(out). It carries out the reaction D-serine(out) + H(+)(out) = D-serine(in) + H(+)(in). The enzyme catalyses 4-aminobutanoate(in) + H(+)(in) = 4-aminobutanoate(out) + H(+)(out). The catalysed reaction is beta-alanine(in) + H(+)(in) = beta-alanine(out) + H(+)(out). Its function is as follows. Electrogenic proton/amino acid symporter with selectivity for small apolar L-amino acids, their D-enantiomers and selected amino acid derivatives such as 4-aminobutanoate/GABA. May be involved in the efflux from the lysosomal compartment of neutral amino acids resulting from proteolysis. May play a role in specifying sites for exocytosis in neurons. The sequence is that of Proton-coupled amino acid transporter 1 from Rattus norvegicus (Rat).